We begin with the raw amino-acid sequence, 1403 residues long: Centrosomal protein of 162 kDa (1403 aa).

Residues 18 to 42 form a disordered region; sequence KELSDDSFENSDKTARQSKKEMKKK. Residues serine 157 and serine 160 each carry the phosphoserine modification. Positions 170-231 are disordered; it reads QANAELTDDE…EKISVPKQEE (62 aa). A compositionally biased stretch (basic and acidic residues) spans 208 to 231; it reads TKDEEMPSKENSKSEKISVPKQEE. Phosphoserine occurs at positions 474 and 475. Positions 476 to 504 are disordered; it reads EEEGAVMGKQVPYKKARSAPPLLKRKPQS. The segment covering 487–502 has biased composition (basic residues); sequence PYKKARSAPPLLKRKP. Coiled-coil stretches lie at residues 617–670, 698–1121, 1171–1206, and 1235–1386; these read KRVQ…QDNY, VTGE…MLSN, EVLQ…QFEN, and CQNA…LHRQ.

The protein belongs to the CEP162 family. As to quaternary structure, interacts with CEP290. Interacts with CPNE4. Interacts with alpha-tubulin.

It is found in the cytoplasm. The protein localises to the cytoskeleton. It localises to the microtubule organizing center. Its subcellular location is the centrosome. The protein resides in the centriole. It is found in the spindle. The protein localises to the nucleus. In terms of biological role, required to promote assembly of the transition zone in primary cilia. Acts by specifically recognizing and binding the axonemal microtubule. Localizes to the distal ends of centrioles before ciliogenesis and directly binds to axonemal microtubule, thereby promoting and restricting transition zone formation specifically at the cilia base. Required to mediate CEP290 association with microtubules. The polypeptide is Centrosomal protein of 162 kDa (CEP162) (Homo sapiens (Human)).